The sequence spans 252 residues: Glucosamine-6-phosphate deaminase (252 aa).

Asp64 acts as the Proton acceptor; for enolization step in catalysis. Asn130 acts as the For ring-opening step in catalysis. Residue His132 is the Proton acceptor; for ring-opening step of the active site. The active-site For ring-opening step is Glu137.

The protein belongs to the glucosamine/galactosamine-6-phosphate isomerase family. NagB subfamily.

It carries out the reaction alpha-D-glucosamine 6-phosphate + H2O = beta-D-fructose 6-phosphate + NH4(+). Its pathway is amino-sugar metabolism; N-acetylneuraminate degradation; D-fructose 6-phosphate from N-acetylneuraminate: step 5/5. Its function is as follows. Catalyzes the reversible isomerization-deamination of glucosamine 6-phosphate (GlcN6P) to form fructose 6-phosphate (Fru6P) and ammonium ion. In Exiguobacterium sibiricum (strain DSM 17290 / CCUG 55495 / CIP 109462 / JCM 13490 / 255-15), this protein is Glucosamine-6-phosphate deaminase.